The chain runs to 73 residues: Somatostatin-2 (73 aa).

Positions 1 to 45 (SAGLLTQEWSAVEDLLAQMSLPEADAQRDAEMVSTATGGGRMNQE) are excised as a propeptide. A disordered region spans residues 23 to 58 (EADAQRDAEMVSTATGGGRMNQESIEPPNNLPPRER). C62 and C73 form a disulfide bridge.

The protein belongs to the somatostatin family.

The protein localises to the secreted. In terms of biological role, somatostatin inhibits the release of somatotropin. The protein is Somatostatin-2 (sst2) of Platichthys flesus (European flounder).